The chain runs to 313 residues: Ribosomal protein L11 methyltransferase (313 aa).

4 residues coordinate S-adenosyl-L-methionine: Thr-161, Gly-182, Asp-204, and Asn-247.

Belongs to the methyltransferase superfamily. PrmA family.

It localises to the cytoplasm. The catalysed reaction is L-lysyl-[protein] + 3 S-adenosyl-L-methionine = N(6),N(6),N(6)-trimethyl-L-lysyl-[protein] + 3 S-adenosyl-L-homocysteine + 3 H(+). In terms of biological role, methylates ribosomal protein L11. In Alkaliphilus oremlandii (strain OhILAs) (Clostridium oremlandii (strain OhILAs)), this protein is Ribosomal protein L11 methyltransferase.